The primary structure comprises 390 residues: COP9/Signalosome and eIF3 complex-shared subunit 1 (390 aa).

Positions 188–351 constitute a PCI domain; it reads QAAKVMTALL…RTLIVSSYQH (164 aa).

This sequence belongs to the eIF-3 subunit M family. Component of the eukaryotic translation initiation factor 3 (eIF-3) complex. Within the eIF-3 complex, interacts directly with eif-3.F. Component of the CSN complex, composed of csn-1, csn-2, csn-3, csn-4, csn-5, csn-6 and csn-7. Within the CSN complex, interacts directly with csn-1 and csn-4.

It localises to the cytoplasm. Functionally, component of the eukaryotic translation initiation factor 3 (eIF-3) complex, which is involved in protein synthesis of a specialized repertoire of mRNAs and, together with other initiation factors, stimulates binding of mRNA and methionyl-tRNAi to the 40S ribosome. The eIF-3 complex specifically targets and initiates translation of a subset of mRNAs involved in cell proliferation (Potential). Component of the COP9 signalosome complex (CSN), a complex involved in various cellular and developmental processes. The CSN complex is an essential regulator of the ubiquitin (Ubl) conjugation pathway by mediating the deneddylation of the cullin subunits of the SCF-type E3 ligase complexes, leading to decrease the Ubl ligase activity of SCF. The CSN complex plays an essential role in embryogenesis and oogenesis and is required to regulate microtubule stability in the early embryo. Mediates mei-1 targeting for degradation at the meiosis to mitosis transition via deneddylation of cul-3. This is COP9/Signalosome and eIF3 complex-shared subunit 1 from Caenorhabditis elegans.